The chain runs to 258 residues: Tryptophan synthase alpha chain (258 aa).

Active-site proton acceptor residues include Glu52 and Asp63.

Belongs to the TrpA family. In terms of assembly, tetramer of two alpha and two beta chains.

It carries out the reaction (1S,2R)-1-C-(indol-3-yl)glycerol 3-phosphate + L-serine = D-glyceraldehyde 3-phosphate + L-tryptophan + H2O. Its pathway is amino-acid biosynthesis; L-tryptophan biosynthesis; L-tryptophan from chorismate: step 5/5. The alpha subunit is responsible for the aldol cleavage of indoleglycerol phosphate to indole and glyceraldehyde 3-phosphate. The sequence is that of Tryptophan synthase alpha chain from Streptococcus pneumoniae (strain Taiwan19F-14).